Reading from the N-terminus, the 61-residue chain is Putative neurotoxin-D (61 aa).

The first 19 residues, 1-19 (MRTTVAILLVLFALSAILA), serve as a signal peptide directing secretion. 3 disulfide bridges follow: Cys-31/Cys-51, Cys-37/Cys-56, and Cys-39/Cys-58.

As to expression, expressed by the venom gland.

It is found in the secreted. This is Putative neurotoxin-D from Lychas mucronatus (Chinese swimming scorpion).